Reading from the N-terminus, the 354-residue chain is Maleylacetate reductase 1 (354 aa).

This sequence belongs to the iron-containing alcohol dehydrogenase family. Homodimer.

The catalysed reaction is 3-oxoadipate + NAD(+) = maleylacetate + NADH + H(+). The enzyme catalyses 3-oxoadipate + NADP(+) = maleylacetate + NADPH + H(+). It participates in aromatic compound metabolism; 3-chlorocatechol degradation. The protein is Maleylacetate reductase 1 (tfdFI) of Cupriavidus pinatubonensis (strain JMP 134 / LMG 1197) (Cupriavidus necator (strain JMP 134)).